Reading from the N-terminus, the 439-residue chain is Rhodopsin (439 aa).

N-linked (GlcNAc...) asparagine glycosylation is present at asparagine 1. The Extracellular segment spans residues 1–26; that stretch reads NETWWYNPYMDIHSHWKQFDQVPAAV. Residues 27–51 traverse the membrane as a helical segment; sequence YYSLGIFIAICGIIGCAGNGIVIYL. Residues 52 to 63 lie on the Cytoplasmic side of the membrane; sequence FTKTKSLQTPAN. The helical transmembrane segment at 64–90 threads the bilayer; sequence MFIINLAFSDFTFSLVNGFPMMTISCF. At 91-102 the chain is on the extracellular side; the sequence is LKHWVFGQAACK. Cysteine 101 and cysteine 179 are disulfide-bonded. A helical transmembrane segment spans residues 103–124; that stretch reads VYGLIGGIFGLTSIMTMTMISI. The short motif at 125–127 is the 'Ionic lock' involved in activated form stabilization element; that stretch reads DRY. Residues 125-144 are Cytoplasmic-facing; the sequence is DRYNVIRRPMSASKKMSHRK. The helical transmembrane segment at 145 to 165 threads the bilayer; the sequence is AFIMIVFVWIWSTIWAIGPIF. Topologically, residues 166 to 192 are extracellular; it reads GWGAYQLEGVLCNCSFDYITRDASTRS. Residues 193 to 217 traverse the membrane as a helical segment; the sequence is NIVCMYIFAFMFPIVVIFFCYFNIV. At 218-254 the chain is on the cytoplasmic side; that stretch reads MSVSNHEKEMAAMAKRLNAKELRKAQAGASAEMKLAK. The chain crosses the membrane as a helical span at residues 255–276; that stretch reads ISIVIVTQSLLSWSPYAIVALL. The Extracellular portion of the chain corresponds to 277 to 286; the sequence is AQFGPIEWVT. The chain crosses the membrane as a helical span at residues 287 to 308; it reads PYAAQLPVMFAKASAIHNPMIY. Lysine 298 bears the N6-(retinylidene)lysine mark. The Cytoplasmic portion of the chain corresponds to 309-439; that stretch reads SVSHPKFREA…PQAAPPQGVD (131 aa). Residues cysteine 329 and cysteine 330 are each lipidated (S-palmitoyl cysteine). Positions 369–381 are enriched in low complexity; that stretch reads MMQKMQAQQQQQP. Positions 369–439 are disordered; the sequence is MMQKMQAQQQ…PQAAPPQGVD (71 aa). Positions 382 to 433 are enriched in pro residues; it reads AYPPQGYPPQGYPPPPPQGYPPQGYPPQGYPPQGYPPPPQGPPPQGPPPQAA.

It belongs to the G-protein coupled receptor 1 family. Opsin subfamily. Contains one covalently linked retinal chromophore. Upon light absorption, the covalently bound 11-cis-retinal is converted to all-trans-retinal. After hydrolysis of the Schiff base and release of the covalently bound all-trans-retinal, active rhodopsin is regenerated by binding of a fresh molecule of 11-cis-retinal.

Its subcellular location is the cell projection. It is found in the rhabdomere membrane. Its function is as follows. Photoreceptor required for image-forming vision at low light intensity. Light-induced isomerization of 11-cis to all-trans retinal triggers a conformational change that activates signaling via G-proteins. Signaling mediates the activation of phospholipase C. Subsequent receptor phosphorylation mediates displacement of the bound G-protein alpha subunit by arrestin and terminates signaling. The chain is Rhodopsin (RHO) from Alloteuthis subulata (Squid).